The primary structure comprises 1148 residues: Phospholipid-transporting ATPase IB (1148 aa).

Residues 1–44 (MSRATSVGDQLEAPARIIYLNQSHLNKFCDNRISTAKYSVLTFL) are Cytoplasmic-facing. Position 5 is a phosphothreonine (T5). Residues 45-66 (PRFLYEQIRRAANAFFLFIALL) form a helical membrane-spanning segment. The Exoplasmic loop segment spans residues 67-71 (QQIPD). Residues 72–94 (VSPTGRYTTLVPLVIILTIAGIK) traverse the membrane as a helical segment. Residues 95–276 (EIIEDFKRHK…SNVEKVTNVQ (182 aa)) lie on the Cytoplasmic side of the membrane. Residues 277–298 (ILVLFGILLVMALVSSVGALFW) form a helical membrane-spanning segment. Residues 299–323 (NGSHGGKSWYIKKMDTNSDNFGYNL) are Exoplasmic loop-facing. Residues 324-345 (LTFIILYNNLIPISLLVTLEVV) form a helical membrane-spanning segment. Topologically, residues 346 to 837 (KYTQALFINW…GAWSYNRVTK (492 aa)) are cytoplasmic. Catalysis depends on D388, which acts as the 4-aspartylphosphate intermediate. 12 residues coordinate ATP: D388, K389, T390, E488, F529, K552, R585, T665, G666, D667, R755, and K761. D388 lines the Mg(2+) pocket. T390 provides a ligand contact to Mg(2+). Mg(2+) is bound at residue D781. N784 and D785 together coordinate ATP. D785 is a binding site for Mg(2+). A helical transmembrane segment spans residues 838–858 (CILYCFYKNVVLYIIELWFAF). Topologically, residues 859–870 (VNGFSGQILFER) are exoplasmic loop. The helical transmembrane segment at 871–890 (WCIGLYNVIFTALPPFTLGI) threads the bilayer. The Cytoplasmic segment spans residues 891-920 (FERSCTQESMLRFPQLYRITQNAEGFNTKV). A helical membrane pass occupies residues 921 to 942 (FWGHCINALVHSLILFWVPMKA). Topologically, residues 943–956 (LEHDTPVTSGHATD) are exoplasmic loop. Residues 957–979 (YLFVGNIVYTYVVVTVCLKAGLE) form a helical membrane-spanning segment. At 980-985 (TTAWTK) the chain is on the cytoplasmic side. The chain crosses the membrane as a helical span at residues 986–1006 (FSHLAVWGSMLIWLVFFGVYS). Topologically, residues 1007–1024 (TIWPTIPIAPDMKGQATM) are exoplasmic loop. Residues 1025 to 1049 (VLSSAYFWLGLFLVPTACLIEDVAW) form a helical membrane-spanning segment. Over 1050 to 1148 (RAAKHTCKKT…DTTKENSRKK (99 aa)) the chain is Cytoplasmic.

The protein belongs to the cation transport ATPase (P-type) (TC 3.A.3) family. Type IV subfamily. As to quaternary structure, component of a P4-ATPase flippase complex which consists of a catalytic alpha subunit and an accessory beta subunit. Interacts with TMEM30A to form a flippase complex. Mg(2+) serves as cofactor. Found in testis, heart and brain. Most abundant in testis. Also detected in fetal tissues. Expressed in retinal photoreceptor cells; detected in retina outer nuclear layer and inner segment (at protein level).

The protein localises to the membrane. It is found in the golgi apparatus membrane. Its subcellular location is the endosome membrane. The protein resides in the cell membrane. It localises to the photoreceptor outer segment membrane. The protein localises to the photoreceptor inner segment membrane. The enzyme catalyses ATP + H2O + phospholipidSide 1 = ADP + phosphate + phospholipidSide 2.. The catalysed reaction is a 1,2-diacyl-sn-glycero-3-phospho-L-serine(out) + ATP + H2O = a 1,2-diacyl-sn-glycero-3-phospho-L-serine(in) + ADP + phosphate + H(+). It carries out the reaction a 1,2-diacyl-sn-glycero-3-phosphoethanolamine(in) + ATP + H2O = a 1,2-diacyl-sn-glycero-3-phosphoethanolamine(out) + ADP + phosphate + H(+). Functionally, catalytic component of a P4-ATPase flippase complex which catalyzes the hydrolysis of ATP coupled to the transport of aminophospholipids from the outer to the inner leaflet of various membranes and ensures the maintenance of asymmetric distribution of phospholipids. Able to translocate phosphatidylserine, but not phosphatidylcholine. Phospholipid translocation also seems to be implicated in vesicle formation and in uptake of lipid signaling molecules. Reconstituted to liposomes, the ATP8A2:TMEM30A flippase complex predominantly transports phosphatidylserine (PS) and to a lesser extent phosphatidylethanolamine (PE). Phospholipid translocation is not associated with a countertransport of an inorganic ion or other charged substrate from the cytoplasmic side toward the exoplasm in connection with the phosphorylation from ATP. ATP8A2:TMEM30A may be involved in regulation of neurite outgrowth. Proposed to function in the generation and maintenance of phospholipid asymmetry in photoreceptor disk membranes and neuronal axon membranes. May be involved in vesicle trafficking in neuronal cells. Required for normal visual and auditory function; involved in photoreceptor and inner ear spiral ganglion cell survival. The protein is Phospholipid-transporting ATPase IB of Mus musculus (Mouse).